Reading from the N-terminus, the 137-residue chain is Large ribosomal subunit protein uL16 (137 aa).

It belongs to the universal ribosomal protein uL16 family. Part of the 50S ribosomal subunit.

Its function is as follows. Binds 23S rRNA and is also seen to make contacts with the A and possibly P site tRNAs. The protein is Large ribosomal subunit protein uL16 of Streptococcus pyogenes serotype M1.